We begin with the raw amino-acid sequence, 146 residues long: Large ribosomal subunit protein uL15 (146 aa).

Residues 1–57 are disordered; that stretch reads MKLFELQPAPGSKKLPKRKGRGHGTGNGKTAGRGHKGQNARSGGGVRPGFEGGQMPL. Gly residues predominate over residues 42 to 52; it reads SGGGVRPGFEG.

It belongs to the universal ribosomal protein uL15 family. Part of the 50S ribosomal subunit.

Functionally, binds to the 23S rRNA. The polypeptide is Large ribosomal subunit protein uL15 (Acetivibrio thermocellus (strain ATCC 27405 / DSM 1237 / JCM 9322 / NBRC 103400 / NCIMB 10682 / NRRL B-4536 / VPI 7372) (Clostridium thermocellum)).